A 270-amino-acid polypeptide reads, in one-letter code: Mediator of RNA polymerase II transcription subunit 4 (270 aa).

Residues 1–25 form a disordered region; it reads MAAASSGEKEKERPGGGLGAAGGNS. Position 2 is an N-acetylalanine (alanine 2). Coiled coils occupy residues 24–48 and 90–131; these read NSTRERLLSALEDLEVLSRELIEML and HHEM…AKEK. Serine 32 is subject to Phosphoserine. Positions 231–270 are disordered; the sequence is MLPPNHSHDFLLEPPGHNKENEDDVEVMSTDSSSSSSDSD. Basic and acidic residues predominate over residues 236-250; sequence HSHDFLLEPPGHNKE. The span at 259–270 shows a compositional bias: low complexity; that stretch reads STDSSSSSSDSD.

It belongs to the Mediator complex subunit 4 family. In terms of assembly, component of the Mediator complex, which is composed of MED1, MED4, MED6, MED7, MED8, MED9, MED10, MED11, MED12, MED13, MED13L, MED14, MED15, MED16, MED17, MED18, MED19, MED20, MED21, MED22, MED23, MED24, MED25, MED26, MED27, MED29, MED30, MED31, CCNC, CDK8 and CDC2L6/CDK11. The MED12, MED13, CCNC and CDK8 subunits form a distinct module termed the CDK8 module. Mediator containing the CDK8 module is less active than Mediator lacking this module in supporting transcriptional activation. Individual preparations of the Mediator complex lacking one or more distinct subunits have been variously termed ARC, CRSP, DRIP, PC2, SMCC and TRAP.

Its subcellular location is the nucleus. In terms of biological role, component of the Mediator complex, a coactivator involved in the regulated transcription of nearly all RNA polymerase II-dependent genes. Mediator functions as a bridge to convey information from gene-specific regulatory proteins to the basal RNA polymerase II transcription machinery. Mediator is recruited to promoters by direct interactions with regulatory proteins and serves as a scaffold for the assembly of a functional preinitiation complex with RNA polymerase II and the general transcription factors. This Bos taurus (Bovine) protein is Mediator of RNA polymerase II transcription subunit 4 (MED4).